The chain runs to 730 residues: Regulatory factor X 4 (730 aa).

The span at 30 to 41 shows a compositional bias: polar residues; it reads YSSHTSLGNISN. The disordered stretch occupies residues 30-59; it reads YSSHTSLGNISNDETDEEKENRASKPHSTP. The segment at residues 61–136 is a DNA-binding region (RFX-type winged-helix); it reads TLQWLGENYE…YHYYGIAVKE (76 aa). Residues 500–532 are disordered; it reads EPAISTPSPVPFSPAASSSSVEIPSATSPVSNQ. Low complexity predominate over residues 512-528; that stretch reads SPAASSSSVEIPSATSP.

Belongs to the RFX family.

The protein resides in the nucleus. In terms of biological role, required for neural tube ciliogenesis during embryogenesis. This chain is Regulatory factor X 4, found in Xenopus laevis (African clawed frog).